A 483-amino-acid chain; its full sequence is Aspartyl/glutamyl-tRNA(Asn/Gln) amidotransferase subunit B (483 aa).

Belongs to the GatB/GatE family. GatB subfamily. Heterotrimer of A, B and C subunits.

It carries out the reaction L-glutamyl-tRNA(Gln) + L-glutamine + ATP + H2O = L-glutaminyl-tRNA(Gln) + L-glutamate + ADP + phosphate + H(+). The enzyme catalyses L-aspartyl-tRNA(Asn) + L-glutamine + ATP + H2O = L-asparaginyl-tRNA(Asn) + L-glutamate + ADP + phosphate + 2 H(+). In terms of biological role, allows the formation of correctly charged Asn-tRNA(Asn) or Gln-tRNA(Gln) through the transamidation of misacylated Asp-tRNA(Asn) or Glu-tRNA(Gln) in organisms which lack either or both of asparaginyl-tRNA or glutaminyl-tRNA synthetases. The reaction takes place in the presence of glutamine and ATP through an activated phospho-Asp-tRNA(Asn) or phospho-Glu-tRNA(Gln). The protein is Aspartyl/glutamyl-tRNA(Asn/Gln) amidotransferase subunit B of Granulibacter bethesdensis (strain ATCC BAA-1260 / CGDNIH1).